Consider the following 89-residue polypeptide: Small ribosomal subunit protein uS15 (89 aa).

The protein belongs to the universal ribosomal protein uS15 family. As to quaternary structure, part of the 30S ribosomal subunit. Forms a bridge to the 50S subunit in the 70S ribosome, contacting the 23S rRNA.

Its function is as follows. One of the primary rRNA binding proteins, it binds directly to 16S rRNA where it helps nucleate assembly of the platform of the 30S subunit by binding and bridging several RNA helices of the 16S rRNA. In terms of biological role, forms an intersubunit bridge (bridge B4) with the 23S rRNA of the 50S subunit in the ribosome. The polypeptide is Small ribosomal subunit protein uS15 (Corynebacterium diphtheriae (strain ATCC 700971 / NCTC 13129 / Biotype gravis)).